The primary structure comprises 108 residues: Nucleoid-associated protein Lcho_1975 (108 aa).

The protein belongs to the YbaB/EbfC family. In terms of assembly, homodimer.

It is found in the cytoplasm. It localises to the nucleoid. Binds to DNA and alters its conformation. May be involved in regulation of gene expression, nucleoid organization and DNA protection. The chain is Nucleoid-associated protein Lcho_1975 from Leptothrix cholodnii (strain ATCC 51168 / LMG 8142 / SP-6) (Leptothrix discophora (strain SP-6)).